Consider the following 260-residue polypeptide: Snake venom serine protease homolog 2A (260 aa).

Positions 1–18 are cleaved as a signal peptide; sequence MVLIRVLANLLILQLSYA. The propeptide occupies 19–24; that stretch reads QKSSEL. The Peptidase S1 domain maps to 25–251; it reads IIGGDECNIN…HLDWIKSIIA (227 aa). 6 disulfide bridges follow: C31/C165, C52/C68, C100/C258, C144/C212, C176/C191, and C202/C227. N-linked (GlcNAc...) asparagine glycans are attached at residues N83, N123, and N124.

Belongs to the peptidase S1 family. Snake venom subfamily. As to expression, expressed by the venom gland.

The protein localises to the secreted. Functionally, snake venom serine protease homolog that may act in the hemostasis system of the prey. The protein is Snake venom serine protease homolog 2A (TLG2A) of Craspedocephalus gramineus (Bamboo pit viper).